A 185-amino-acid polypeptide reads, in one-letter code: ATP-dependent protease subunit HslV (185 aa).

Residue Thr12 is part of the active site. Ala168, Cys171, and Thr174 together coordinate Na(+).

It belongs to the peptidase T1B family. HslV subfamily. A double ring-shaped homohexamer of HslV is capped on each side by a ring-shaped HslU homohexamer. The assembly of the HslU/HslV complex is dependent on binding of ATP.

The protein localises to the cytoplasm. The catalysed reaction is ATP-dependent cleavage of peptide bonds with broad specificity.. Its activity is regulated as follows. Allosterically activated by HslU binding. Functionally, protease subunit of a proteasome-like degradation complex believed to be a general protein degrading machinery. The polypeptide is ATP-dependent protease subunit HslV (Roseobacter denitrificans (strain ATCC 33942 / OCh 114) (Erythrobacter sp. (strain OCh 114))).